Consider the following 329-residue polypeptide: Indolepyruvate C-methyltransferase (329 aa).

Belongs to the methyltransferase superfamily.

It carries out the reaction indole-3-pyruvate + S-adenosyl-L-methionine = (R)-3-(indol-3-yl)-2-oxobutanoate + S-adenosyl-L-homocysteine + H(+). With respect to regulation, strongly inhibited by the thiol reagents p-chloromercuribenzoate and N-ethylmaleimide. Partially inhibited by o-phenanthroline and 2,2'-dipyridyl. Competitively inhibited by L-tryptophan and indolmycin. Its function is as follows. Involved in the biosynthesis of the antibiotic indolmycin, an inhibitor of the bacterial tryptophan-tRNA synthetases. Catalyzes the transfer of a methyl group from S-adenosyl-L-methionine to position 3 of the aliphatic side chain of (indol-3-yl)pyruvate to yield 3-methylindolepyruvate. In Streptomyces griseus, this protein is Indolepyruvate C-methyltransferase.